Here is a 207-residue protein sequence, read N- to C-terminus: Small ribosomal subunit protein uS2 (207 aa).

This sequence belongs to the universal ribosomal protein uS2 family.

The polypeptide is Small ribosomal subunit protein uS2 (Pyrobaculum islandicum (strain DSM 4184 / JCM 9189 / GEO3)).